The sequence spans 1255 residues: ATP-binding cassette sub-family B member 5 (1255 aa).

The chain crosses the membrane as a helical span at residues 46–66 (IVLMTLGILASMINGATVPLM). The region spanning 51–351 (LGILASMING…SVAPHLETFT (301 aa)) is the ABC transmembrane type-1 1 domain. Residues Asn86 and Asn92 are each glycosylated (N-linked (GlcNAc...) asparagine). The helical transmembrane segment at 104 to 124 (IIVLTLYYIGIGAAALIFGYV) threads the bilayer. Asn189 carries an N-linked (GlcNAc...) asparagine glycan. 2 helical membrane-spanning segments follow: residues 290-310 (LSLG…FWYG) and 314-334 (IFGG…FSVI). N-linked (GlcNAc...) asparagine glycans are attached at residues Asn372 and Asn391. Residues 387-623 (IEFKNVSFSY…QGLYYSLAMA (237 aa)) enclose the ABC transporter 1 domain. 422-429 (GPSGSGKS) provides a ligand contact to ATP. Residue Asn643 is glycosylated (N-linked (GlcNAc...) asparagine). 2 consecutive transmembrane segments (helical) span residues 694–714 (VLGT…SIIF) and 738–758 (MMLV…GLFY). An ABC transmembrane type-1 2 domain is found at 694 to 981 (VLGTLASALN…TLVWAPEYSK (288 aa)). An N-linked (GlcNAc...) asparagine glycan is attached at Asn790. The next 3 membrane-spanning stretches (helical) occupy residues 814 to 836 (LGIV…IYGW), 841 to 863 (LILS…MAGF), and 955 to 975 (MFIV…TLVW). The region spanning 1016 to 1254 (LEFREVSFVY…GDTYFKLVAA (239 aa)) is the ABC transporter 2 domain. A glycan (N-linked (GlcNAc...) asparagine) is linked at Asn1036. 1051-1058 (GSSGCGKS) provides a ligand contact to ATP. 3 N-linked (GlcNAc...) asparagine glycosylation sites follow: Asn1105, Asn1189, and Asn1229.

This sequence belongs to the ABC transporter superfamily. ABCB family. Multidrug resistance exporter (TC 3.A.1.201) subfamily. As to expression, in developing eye, expressed in basal limbal epithelium but not in central cornea. Acts as a marker of limbal stem cells.

The protein resides in the cell membrane. It catalyses the reaction daunorubicin(in) + ATP + H2O = daunorubicin(out) + ADP + phosphate + H(+). Its function is as follows. Energy-dependent efflux transporter responsible for decreased drug accumulation in multidrug-resistant cells. Specifically present in limbal stem cells, where it plays a key role in corneal development and repair. The sequence is that of ATP-binding cassette sub-family B member 5 from Mus musculus (Mouse).